A 179-amino-acid chain; its full sequence is Large ribosomal subunit protein uL6 (179 aa).

The protein belongs to the universal ribosomal protein uL6 family. Part of the 50S ribosomal subunit.

In terms of biological role, this protein binds to the 23S rRNA, and is important in its secondary structure. It is located near the subunit interface in the base of the L7/L12 stalk, and near the tRNA binding site of the peptidyltransferase center. The chain is Large ribosomal subunit protein uL6 from Methylacidiphilum infernorum (isolate V4) (Methylokorus infernorum (strain V4)).